We begin with the raw amino-acid sequence, 156 residues long: Ribosome maturation factor RimP (156 aa).

It belongs to the RimP family.

Its subcellular location is the cytoplasm. Its function is as follows. Required for maturation of 30S ribosomal subunits. The sequence is that of Ribosome maturation factor RimP from Oenococcus oeni (strain ATCC BAA-331 / PSU-1).